The primary structure comprises 331 residues: Pantothenate kinase (331 aa).

Residue 109 to 116 (GSVAVGKS) coordinates ATP.

The protein belongs to the prokaryotic pantothenate kinase family.

It is found in the cytoplasm. It catalyses the reaction (R)-pantothenate + ATP = (R)-4'-phosphopantothenate + ADP + H(+). The protein operates within cofactor biosynthesis; coenzyme A biosynthesis; CoA from (R)-pantothenate: step 1/5. This Rhizobium etli (strain CIAT 652) protein is Pantothenate kinase.